A 1391-amino-acid chain; its full sequence is ESX-5 secretion system protein EccC5 (1391 aa).

2 helical membrane passes run W38–F58 and F65–F85. 3 consecutive FtsK domains span residues G476 to Q678, Q858 to K1052, and L1161 to E1354. Residues G499–S506, G876–T883, and G1178–T1185 each bind ATP.

In terms of assembly, part of the ESX-5 / type VII secretion system (T7SS), which is composed of cytosolic and membrane components. The ESX-5 membrane complex is composed of EccB5, EccC5, EccD5 and EccE5.

It is found in the cell inner membrane. In terms of biological role, part of the ESX-5 specialized secretion system, which is responsible for the secretion of EsxN and a number of PE_PGRS and PPE proteins, including PPE41. This is ESX-5 secretion system protein EccC5 from Mycobacterium tuberculosis (strain CDC 1551 / Oshkosh).